The following is a 506-amino-acid chain: Parthenolide synthase (506 aa).

The chain crosses the membrane as a helical span at residues 10–30 (LFLPTLCTILISYIIIKYVLI). Asn32, Asn63, Asn121, Asn168, and Asn175 each carry an N-linked (GlcNAc...) asparagine glycan. The helical transmembrane segment at 301-321 (LLLNVLLGAIDTTFTTIVWAM) threads the bilayer. Position 448 (Cys448) interacts with heme.

This sequence belongs to the cytochrome P450 family.

It is found in the membrane. The enzyme catalyses (+)-costunolide + reduced [NADPH--hemoprotein reductase] + O2 = parthenolide + oxidized [NADPH--hemoprotein reductase] + H2O + H(+). Its pathway is secondary metabolite biosynthesis; terpenoid biosynthesis. In terms of biological role, involved in the biosynthesis of germacrene-derived sesquiterpene lactones. Component of the parthenolide biosynthetic pathway; parthenolide and conjugates are promising anti-cancer drugs highly active against colon cancer cells. Catalyzes the conversion of costunolide to parthenolide. The protein is Parthenolide synthase of Tanacetum parthenium (Feverfew).